Consider the following 632-residue polypeptide: Maltase 1 (632 aa).

Over residues 1–29 (MEEGERWREGHVYQRSSETRKPTNYDRPD) the composition is skewed to basic and acidic residues. A disordered region spans residues 1–30 (MEEGERWREGHVYQRSSETRKPTNYDRPDS). N-linked (GlcNAc...) asparagine glycans are attached at residues N179 and N212. The active-site Nucleophile is D280. N333 carries N-linked (GlcNAc...) asparagine glycosylation. The active-site Proton donor is the E348. N461, N575, and N578 each carry an N-linked (GlcNAc...) asparagine glycan.

Belongs to the glycosyl hydrolase 13 family.

The catalysed reaction is Hydrolysis of terminal, non-reducing (1-&gt;4)-linked alpha-D-glucose residues with release of alpha-D-glucose.. The sequence is that of Maltase 1 (Mal-B1) from Drosophila virilis (Fruit fly).